A 361-amino-acid chain; its full sequence is Caffeic acid 3-O-methyltransferase 2 (361 aa).

128–134 is a binding site for substrate; the sequence is MNQDKVL. The interval 160-178 is substrate binding; it reads AFEYHGTDPRFNKVFNQGM. Positions 206, 229, 249, 250, and 263 each coordinate S-adenosyl-L-methionine. The Proton acceptor role is filled by H267.

The protein belongs to the class I-like SAM-binding methyltransferase superfamily. Cation-independent O-methyltransferase family. COMT subfamily. As to quaternary structure, homodimer.

It carries out the reaction (E)-caffeate + S-adenosyl-L-methionine = (E)-ferulate + S-adenosyl-L-homocysteine + H(+). It participates in aromatic compound metabolism; phenylpropanoid biosynthesis. In terms of biological role, catalyzes the conversion of caffeic acid to ferulic acid and of 5-hydroxyferulic acid to sinapic acid. The resulting products may subsequently be converted to the corresponding alcohols that are incorporated into lignins. This is Caffeic acid 3-O-methyltransferase 2 (COMT2) from Ocimum basilicum (Sweet basil).